A 150-amino-acid chain; its full sequence is MQVILLDKIGNLGGLGDTVNVKSGYARNFLIPQGKAVMATKGNVEMFEARRAELEAKVAEQLAAAEARAEKVNALEAVVIASKAGDEGKLFGSIGTRDIAEAITAAGVEVAKSEVRLPEGALRTTGEFEISVQLHSEVFATAKVQVVAAE.

The protein belongs to the bacterial ribosomal protein bL9 family.

Its function is as follows. Binds to the 23S rRNA. This is Large ribosomal subunit protein bL9 from Vibrio parahaemolyticus serotype O3:K6 (strain RIMD 2210633).